The primary structure comprises 448 residues: Putative carbonic anhydrase 2 (448 aa).

Residues 1 to 222 enclose the Alpha-carbonic anhydrase domain; sequence AYRQTENLLY…PAERDVFRII (222 aa). Position 19 (H19) interacts with Zn(2+). N-linked (GlcNAc...) asparagine glycosylation is found at N139 and N198. Positions 229–448 are disordered; it reads RREEDDERGD…DKGDDKGDDN (220 aa). The segment covering 245–280 has biased composition (acidic residues); it reads DDDDNYDDDDYYNDDYSNDDYYDDDYYYDDYDDDTD. 2 stretches are compositionally biased toward basic and acidic residues: residues 281–334 and 342–354; these read DDHK…DDSG and RDGRGNGDSRDRN. N314 is a glycosylation site (N-linked (GlcNAc...) asparagine). Gly residues predominate over residues 357-368; that stretch reads NGNGRENGGVRG. Positions 370–379 are enriched in basic and acidic residues; it reads GNDRDGRRDN. N385 carries an N-linked (GlcNAc...) asparagine glycan. Over residues 386–421 the composition is skewed to basic and acidic residues; sequence GTRRGNGDDRGGRRNEDRGENRRGKDDQERESEDGR. Residues 422-435 show a composition bias toward basic residues; sequence RRRRRFNGRRRRRG. The span at 436 to 448 shows a compositional bias: basic and acidic residues; sequence RGDDKGDDKGDDN.

It belongs to the alpha-carbonic anhydrase family. Component of the acid-insoluble and acid-soluble organic matrix of calcified layers of the shell (at protein level).

The protein localises to the secreted. It carries out the reaction hydrogencarbonate + H(+) = CO2 + H2O. In terms of biological role, reversible hydration of carbon dioxide. This Lottia gigantea (Giant owl limpet) protein is Putative carbonic anhydrase 2.